We begin with the raw amino-acid sequence, 173 residues long: Thaumatin-like protein PWIR2 (173 aa).

A signal peptide spans 1–20; that stretch reads MATSPVLFLLLAVFAAGASA.

Belongs to the thaumatin family.

The chain is Thaumatin-like protein PWIR2 from Triticum aestivum (Wheat).